The sequence spans 276 residues: Large ribosomal subunit protein uL2cy (276 aa).

Disordered stretches follow at residues 1–25 (MAIH…VKSN) and 225–276 (MNPV…RRSK). Positions 7–25 (KTSTPSTRNGTVDSQVKSN) are enriched in polar residues.

It belongs to the universal ribosomal protein uL2 family. As to quaternary structure, part of the 50S ribosomal subunit.

It is found in the plastid. The protein localises to the chloroplast. This is Large ribosomal subunit protein uL2cy (rpl2-B) from Coffea arabica (Arabian coffee).